A 192-amino-acid chain; its full sequence is MLRYRGVSIWTVRVKAKKNVVLVGPMGTGKTTIGKLLAKELQFEFVDSDREIEARCGADIPWIFDVEGEVGFRGREKSVIADLSQRDAVVIATGGGAVVDPDNQIALKENGFIVYLHTSVEQQYQRTRKDRKRPLLRSEDPLSVLKKLMSVREPIYRSIADLIISTDSKRPKGVVRDIVKTLRASREETVER.

Position 27 to 32 (27 to 32 (GTGKTT)) interacts with ATP. A Mg(2+)-binding site is contributed by threonine 31. Residues aspartate 49, arginine 73, and glycine 95 each coordinate substrate. Arginine 133 contributes to the ATP binding site. A substrate-binding site is contributed by arginine 152.

It belongs to the shikimate kinase family. Monomer. The cofactor is Mg(2+).

Its subcellular location is the cytoplasm. It catalyses the reaction shikimate + ATP = 3-phosphoshikimate + ADP + H(+). Its pathway is metabolic intermediate biosynthesis; chorismate biosynthesis; chorismate from D-erythrose 4-phosphate and phosphoenolpyruvate: step 5/7. Functionally, catalyzes the specific phosphorylation of the 3-hydroxyl group of shikimic acid using ATP as a cosubstrate. This is Shikimate kinase from Hahella chejuensis (strain KCTC 2396).